Consider the following 507-residue polypeptide: MKNFSKFALTSIAALTVASPLVNTEVDAKDKVSATQNIDAKVTQESQATNALKELPKSENIKKHYKDYKVTDTEKDNKGFTHYTLQPKVGNTYAPDKEVKVHTNKEGKVVLVNGDTDAKKVQPTNKVAISKESATDKAFEAIKIDRQKAKNLKSDVIKTNKVEIDGEKNKYVYNIEIITTSPKISHWNVKIDAETGQVVDKLNMIKEAATTGTGKGVLGDTKQININSVSGGYALQDLTQQGTLSAYNYDANTGQAYLMQDKDKNFVDDEQRAGVDANYYAKETYDYYKNTFGRESYDNQGSPIISIAHVNNFQGQDNRNNAAWIGDKMIYGDGDGRTFTALSGANDVVAHEITHGVTQQTANLVYRSQSGALNESFSDVFGYFIDDEDFLMGEDVYTPGVGGDALRSMSNPERFGQPSHMNDFVYTNSDNGGVHTNSGIPNKAAYNTIRSIGKQRSEQIYYRALTVYLTSNSDFQDAKASLQQAAFDLYGDGIAQQVGQAWDSVGV.

The first 28 residues, 1 to 28 (MKNFSKFALTSIAALTVASPLVNTEVDA), serve as a signal peptide directing secretion. Positions 29 to 207 (KDKVSATQNI…VVDKLNMIKE (179 aa)) are excised as a propeptide. D347 contacts Ca(2+). H351 is a Zn(2+) binding site. Residue E352 is part of the active site. Residues H355 and E375 each coordinate Zn(2+). Residues D386, E388, D389, L391, E394, Y397, T398, V401, and D404 each coordinate Ca(2+). H435 functions as the Proton donor in the catalytic mechanism.

Belongs to the peptidase M4 family. Requires Ca(2+) as cofactor. It depends on Zn(2+) as a cofactor.

The protein localises to the secreted. Its function is as follows. Protease that has a low substrate specificity. Glucagon is preferentially cleaved between aromatic (Phe) and hydrophobic (Val) amino acids. Hydrolyzes casein and elastin. The sequence is that of Extracellular elastase (sepA) from Staphylococcus epidermidis (strain ATCC 12228 / FDA PCI 1200).